We begin with the raw amino-acid sequence, 395 residues long: S-adenosylmethionine synthase (395 aa).

Histidine 15 is an ATP binding site. Aspartate 17 is a Mg(2+) binding site. Residue glutamate 43 participates in K(+) binding. Residues glutamate 56 and glutamine 99 each coordinate L-methionine. A flexible loop region spans residues 99-109 (QSADIALGVDE). ATP contacts are provided by residues 174–176 (DGK), 240–241 (RF), aspartate 249, 255–256 (RK), alanine 272, and lysine 276. Aspartate 249 lines the L-methionine pocket. Lysine 280 is a binding site for L-methionine.

Belongs to the AdoMet synthase family. As to quaternary structure, homotetramer; dimer of dimers. The cofactor is Mg(2+). K(+) is required as a cofactor.

It is found in the cytoplasm. It catalyses the reaction L-methionine + ATP + H2O = S-adenosyl-L-methionine + phosphate + diphosphate. It participates in amino-acid biosynthesis; S-adenosyl-L-methionine biosynthesis; S-adenosyl-L-methionine from L-methionine: step 1/1. Its function is as follows. Catalyzes the formation of S-adenosylmethionine (AdoMet) from methionine and ATP. The overall synthetic reaction is composed of two sequential steps, AdoMet formation and the subsequent tripolyphosphate hydrolysis which occurs prior to release of AdoMet from the enzyme. This chain is S-adenosylmethionine synthase, found in Alkaliphilus oremlandii (strain OhILAs) (Clostridium oremlandii (strain OhILAs)).